A 323-amino-acid polypeptide reads, in one-letter code: Glucokinase (323 aa).

8–13 (GDVGGT) contributes to the ATP binding site.

Belongs to the bacterial glucokinase family.

The protein resides in the cytoplasm. The catalysed reaction is D-glucose + ATP = D-glucose 6-phosphate + ADP + H(+). This Yersinia pseudotuberculosis serotype I (strain IP32953) protein is Glucokinase.